Reading from the N-terminus, the 210-residue chain is Ribosomal RNA large subunit methyltransferase E (210 aa).

Residues glycine 67, tryptophan 69, aspartate 87, aspartate 103, and aspartate 128 each coordinate S-adenosyl-L-methionine. The Proton acceptor role is filled by lysine 168.

This sequence belongs to the class I-like SAM-binding methyltransferase superfamily. RNA methyltransferase RlmE family.

It localises to the cytoplasm. The enzyme catalyses uridine(2552) in 23S rRNA + S-adenosyl-L-methionine = 2'-O-methyluridine(2552) in 23S rRNA + S-adenosyl-L-homocysteine + H(+). Its function is as follows. Specifically methylates the uridine in position 2552 of 23S rRNA at the 2'-O position of the ribose in the fully assembled 50S ribosomal subunit. The polypeptide is Ribosomal RNA large subunit methyltransferase E (Psychrobacter arcticus (strain DSM 17307 / VKM B-2377 / 273-4)).